Reading from the N-terminus, the 547-residue chain is CTP synthase (547 aa).

An amidoligase domain region spans residues 1–265 (MARYIFITGG…DQAVLDAFQI (265 aa)). Ser13 is a binding site for CTP. Position 13 (Ser13) interacts with UTP. Residues 14–19 (SLGKGL) and Asp71 contribute to the ATP site. Mg(2+) contacts are provided by Asp71 and Glu139. Residues 146–148 (DIE), 186–191 (KTKPTQ), and Lys222 contribute to the CTP site. UTP is bound by residues 186 to 191 (KTKPTQ) and Lys222. The 256-residue stretch at 291-546 (RIAVVGKYTQ…IRAAMDNERL (256 aa)) folds into the Glutamine amidotransferase type-1 domain. Residue Gly352 coordinates L-glutamine. The active-site Nucleophile; for glutamine hydrolysis is the Cys379. L-glutamine is bound by residues 380–383 (LGMQ), Glu403, and Arg474. Active-site residues include His519 and Glu521.

It belongs to the CTP synthase family. In terms of assembly, homotetramer.

It carries out the reaction UTP + L-glutamine + ATP + H2O = CTP + L-glutamate + ADP + phosphate + 2 H(+). The catalysed reaction is L-glutamine + H2O = L-glutamate + NH4(+). The enzyme catalyses UTP + NH4(+) + ATP = CTP + ADP + phosphate + 2 H(+). It participates in pyrimidine metabolism; CTP biosynthesis via de novo pathway; CTP from UDP: step 2/2. Its activity is regulated as follows. Allosterically activated by GTP, when glutamine is the substrate; GTP has no effect on the reaction when ammonia is the substrate. The allosteric effector GTP functions by stabilizing the protein conformation that binds the tetrahedral intermediate(s) formed during glutamine hydrolysis. Inhibited by the product CTP, via allosteric rather than competitive inhibition. Functionally, catalyzes the ATP-dependent amination of UTP to CTP with either L-glutamine or ammonia as the source of nitrogen. Regulates intracellular CTP levels through interactions with the four ribonucleotide triphosphates. The protein is CTP synthase of Paracoccus denitrificans (strain Pd 1222).